We begin with the raw amino-acid sequence, 273 residues long: Ribosomal RNA small subunit methyltransferase A (273 aa).

S-adenosyl-L-methionine is bound by residues Asn18, Leu20, Gly45, Glu66, Asp91, and Asn113.

It belongs to the class I-like SAM-binding methyltransferase superfamily. rRNA adenine N(6)-methyltransferase family. RsmA subfamily.

The protein localises to the cytoplasm. The enzyme catalyses adenosine(1518)/adenosine(1519) in 16S rRNA + 4 S-adenosyl-L-methionine = N(6)-dimethyladenosine(1518)/N(6)-dimethyladenosine(1519) in 16S rRNA + 4 S-adenosyl-L-homocysteine + 4 H(+). Functionally, specifically dimethylates two adjacent adenosines (A1518 and A1519) in the loop of a conserved hairpin near the 3'-end of 16S rRNA in the 30S particle. May play a critical role in biogenesis of 30S subunits. The polypeptide is Ribosomal RNA small subunit methyltransferase A (Shigella dysenteriae serotype 1 (strain Sd197)).